A 742-amino-acid polypeptide reads, in one-letter code: Collectin-12 (742 aa).

The Cytoplasmic segment spans residues 1–37 (MKDDFAEEEEVQSFGYKRFGIQEGTQCTKCKNNWALK). A helical; Signal-anchor for type II membrane protein membrane pass occupies residues 38 to 58 (FSIVLLYILCALLTITVAILG). Residues 59 to 742 (YKVVEKMDNV…EREAVPSSIL (684 aa)) lie on the Extracellular side of the membrane. An N-linked (GlcNAc...) asparagine glycan is attached at Asn-67. A coiled-coil region spans residues 73–142 (ETSHQTYDNK…KDTLEKLQAN (70 aa)). Asn-159 and Asn-168 each carry an N-linked (GlcNAc...) asparagine glycan. Residues 205–254 (NLNNLNLTQVQQRNLISNLQQSVDDTSLAIQRIKNDFQNLQQVFLQAKKD) are a coiled coil. The N-linked (GlcNAc...) asparagine glycan is linked to Asn-271. Residues 439–608 (TILQGPPGPR…TPASEVNGCP (170 aa)) are disordered. Collagen-like domains lie at 452 to 511 (GDRG…KGSR) and 527 to 586 (GPPG…PGPS). Over residues 501–514 (SKGSQGPKGSRGSP) the composition is skewed to low complexity. Residues 516 to 532 (KPGPQGPSGDPGPPGPP) are compositionally biased toward pro residues. Residues 534 to 556 (KDGLPGPQGPPGFQGLQGTVGEP) are compositionally biased toward low complexity. Residues 571–585 (PGMPGPKGPPGPPGP) show a composition bias toward pro residues. 3 disulfide bridges follow: Cys-607–Cys-618, Cys-635–Cys-730, and Cys-708–Cys-722. Positions 614-731 (FTDKCYYFSL…CDEINNFICE (118 aa)) constitute a C-type lectin domain. Residues Phe-644, Asn-646, Glu-650, Asp-670, and Glu-674 each contribute to the Ca(2+) site. Positions 691, 694, and 696 each coordinate a carbohydrate. Positions 694, 696, 697, 706, 707, 718, 719, and 731 each coordinate Ca(2+). Glu-706 provides a ligand contact to a carbohydrate. Residues Asn-718 and Asp-719 each coordinate a carbohydrate.

The extracellular domain forms a stable trimer. The extracellular domain interacts with fibrillar amyloid-beta peptide. In terms of tissue distribution, expressed in vascular endothelial cells in the heart, in perivascular macrophage and smooth muscle cells. Expressed in plaques-surrounding reactive astrocytes located in cerebral cortex and hippocampus and in leptomeningeal vessels showing characteristics of cerebral amyloid angiopathy (CAA) in a double transgenic mouse model of Alzheimer disease (at protein level). Strongly expressed in lung. Moderately expressed in heart, skeletal muscle, spleen, liver, brain, colon, testis, stomach and kidney. Expressed in neonatal astrocytes. Expressed in reactive astrocytes and vascular/perivascular cells in the brain of a double transgenic mouse model of Alzheimer disease.

It localises to the membrane. Functionally, scavenger receptor that displays several functions associated with host defense. Promotes binding and phagocytosis of Gram-positive, Gram-negative bacteria and yeast. Also binds to sialyl Lewis X or a trisaccharide and asialo-orosomucoid (ASOR). Mediates the recognition, internalization and degradation of oxidatively modified low density lipoprotein (oxLDL) by vascular endothelial cells. Binds to several carbohydrates including Gal-type ligands, D-galactose, L- and D-fucose, GalNAc, T and Tn antigens in a calcium-dependent manner and internalizes specifically GalNAc in nurse-like cells. This chain is Collectin-12 (Colec12), found in Mus musculus (Mouse).